The sequence spans 446 residues: Protein adenylyltransferase FICD (446 aa).

The Cytoplasmic portion of the chain corresponds to 1–18; it reads MAVTECEWASLGSRIGLR. Residues 19–39 traverse the membrane as a helical; Signal-anchor for type II membrane protein segment; it reads AALVLLSGSLLVVLFPLSGLE. Over 40-446 the chain is Lumenal; that stretch reads HQYRTALNIL…ECKQTITIKT (407 aa). TPR repeat units lie at residues 94–127 and 128–161; these read AKAALNQALEMKRQGKKEKAHKLLHHALKMDPDH and VDALNELGILLEEEKDIIQADYLYSKALTISPHN. The short motif at 218–223 is the Inhibitory (S/T)XXXE(G/N) motif element; sequence TVAIEG. ATP is bound at residue glutamate 222. N-linked (GlcNAc...) asparagine glycosylation occurs at asparagine 263. In terms of domain architecture, Fido spans 273 to 408; it reads VTIDNILEIH…VRPFIRFIAK (136 aa). 304–307 contributes to the ATP binding site; it reads VGHH. The active site involves histidine 351. Residues 355–362, 387–388, and asparagine 395 contribute to the ATP site; these read DGNGRTSR and YY.

Belongs to the fic family. In terms of assembly, homodimer. It depends on Mg(2+) as a cofactor. Requires Mn(2+) as cofactor.

It localises to the endoplasmic reticulum membrane. It carries out the reaction L-tyrosyl-[protein] + ATP = O-(5'-adenylyl)-L-tyrosyl-[protein] + diphosphate. It catalyses the reaction 3-O-(5'-adenylyl)-L-threonyl-[protein] + H2O = L-threonyl-[protein] + AMP + H(+). The catalysed reaction is L-threonyl-[protein] + ATP = 3-O-(5'-adenylyl)-L-threonyl-[protein] + diphosphate. Its activity is regulated as follows. The side chain of Glu-222 determines which of the two opposing activities (AMPylase or de-AMPylase) will take place. In response to endoplasmic reticulum stress, mediates de-AMPylase activity. Adenylyltransferase activity is inhibited by the inhibitory helix present at the N-terminus: Glu-222 binds ATP and competes with ATP-binding at Arg-362, thereby preventing adenylyltransferase activity. In unstressed cells, disengagement of Glu-222 promotes adenylyltransferase activity. Activation dissociates ATP-binding from Glu-222, allowing ordered binding of the entire ATP moiety with the alpha-phosphate in an orientation that is productive for accepting an incoming target hydroxyl side chain. Functionally, protein that can both mediate the addition of adenosine 5'-monophosphate (AMP) to specific residues of target proteins (AMPylation), and the removal of the same modification from target proteins (de-AMPylation), depending on the context. The side chain of Glu-222 determines which of the two opposing activities (AMPylase or de-AMPylase) will take place. Acts as a key regulator of the ERN1/IRE1-mediated unfolded protein response (UPR) by mediating AMPylation or de-AMPylation of HSPA5/BiP. In unstressed cells, acts as an adenylyltransferase by mediating AMPylation of HSPA5/BiP at 'Thr-518', thereby inactivating it. In response to endoplasmic reticulum stress, acts as a phosphodiesterase by mediating removal of ATP (de-AMPylation) from HSPA5/BiP at 'Thr-518', leading to restore HSPA5/BiP activity. The polypeptide is Protein adenylyltransferase FICD (Xenopus tropicalis (Western clawed frog)).